The sequence spans 316 residues: Aspartate carbamoyltransferase catalytic subunit (316 aa).

Residues Arg56 and Thr57 each coordinate carbamoyl phosphate. Lys84 contacts L-aspartate. Carbamoyl phosphate is bound by residues Arg106, His139, and Gln142. Positions 172 and 226 each coordinate L-aspartate. Residues Gly267 and Pro268 each coordinate carbamoyl phosphate.

This sequence belongs to the aspartate/ornithine carbamoyltransferase superfamily. ATCase family. In terms of assembly, heterododecamer (2C3:3R2) of six catalytic PyrB chains organized as two trimers (C3), and six regulatory PyrI chains organized as three dimers (R2).

It catalyses the reaction carbamoyl phosphate + L-aspartate = N-carbamoyl-L-aspartate + phosphate + H(+). It functions in the pathway pyrimidine metabolism; UMP biosynthesis via de novo pathway; (S)-dihydroorotate from bicarbonate: step 2/3. Its function is as follows. Catalyzes the condensation of carbamoyl phosphate and aspartate to form carbamoyl aspartate and inorganic phosphate, the committed step in the de novo pyrimidine nucleotide biosynthesis pathway. The protein is Aspartate carbamoyltransferase catalytic subunit of Mycobacterium sp. (strain MCS).